Here is a 224-residue protein sequence, read N- to C-terminus: 7-cyano-7-deazaguanine synthase (224 aa).

9–19 (ISGGMDSTLCA) contributes to the ATP binding site. Cysteine 190, cysteine 198, cysteine 201, and cysteine 204 together coordinate Zn(2+).

This sequence belongs to the QueC family. Zn(2+) serves as cofactor.

The enzyme catalyses 7-carboxy-7-deazaguanine + NH4(+) + ATP = 7-cyano-7-deazaguanine + ADP + phosphate + H2O + H(+). Its pathway is purine metabolism; 7-cyano-7-deazaguanine biosynthesis. In terms of biological role, catalyzes the ATP-dependent conversion of 7-carboxy-7-deazaguanine (CDG) to 7-cyano-7-deazaguanine (preQ(0)). The chain is 7-cyano-7-deazaguanine synthase from Campylobacter jejuni subsp. doylei (strain ATCC BAA-1458 / RM4099 / 269.97).